The following is a 311-amino-acid chain: Malate dehydrogenase (311 aa).

Residues 7–13 (GAAGGIG) and Asp-34 each bind NAD(+). Substrate-binding residues include Arg-81 and Arg-87. NAD(+) is bound by residues Asn-94 and 117 to 119 (ITN). The substrate site is built by Asn-119 and Arg-153. His-177 acts as the Proton acceptor in catalysis. Met-227 serves as a coordination point for NAD(+).

Belongs to the LDH/MDH superfamily. MDH type 1 family. In terms of assembly, homodimer.

The catalysed reaction is (S)-malate + NAD(+) = oxaloacetate + NADH + H(+). Catalyzes the reversible oxidation of malate to oxaloacetate. The polypeptide is Malate dehydrogenase (Vibrio parahaemolyticus serotype O3:K6 (strain RIMD 2210633)).